The sequence spans 1179 residues: Integrin alpha-1 (1179 aa).

Residues 1–28 (MVPRRPASLEVTVACIWLLTVILGVCIS) form the signal peptide. Residues 29 to 1141 (FNVDVKNSMS…SKDGLPGRVP (1113 aa)) are Extracellular-facing. Residues 30–91 (NVDVKNSMSF…CPVGRERSMP (62 aa)) form an FG-GAP 1 repeat. Cys82 and Cys92 are joined by a disulfide. 9 N-linked (GlcNAc...) asparagine glycosylation sites follow: Asn100, Asn105, Asn112, Asn217, Asn317, Asn341, Asn402, Asn418, and Asn459. Residues 101 to 160 (TSIPNVTEIKENMTFGSTLVTNPKGGFLACGPLYAYRCGHLHYTTGICSDVSPTFQVVNS) form an FG-GAP 2 repeat. The VWFA domain maps to 175–364 (IVLDGSNSIY…LGERIFALEA (190 aa)). An FG-GAP 3 repeat occupies 365-417 (TADQSAASFEMEMSQTGFSAHYSQDWVMLGAVGAYDWNGTVVMQKANQIVIPH). 4 FG-GAP repeats span residues 422 to 474 (QTEP…DGDV), 475 to 537 (NILQ…RFEY), 556 to 614 (SCTK…TIRK), and 618 to 678 (QRIP…FEPN). 4 residues coordinate Ca(2+): Asp497, Asp499, Asp501, and Asp505. Asn531 carries an N-linked (GlcNAc...) asparagine glycan. Ca(2+) contacts are provided by Asp579, Asn581, Asp583, Asp587, Asp641, Asn643, Asp645, and Asp649. A disulfide bridge connects residues Cys687 and Cys696. N-linked (GlcNAc...) asparagine glycans are attached at residues Asn698, Asn747, and Asn779. Cys702 and Cys755 are disulfide-bonded. The cysteines at positions 807 and 813 are disulfide-linked. Asn839, Asn882, Asn907, Asn938, Asn965, Asn973, and Asn1007 each carry an N-linked (GlcNAc...) asparagine glycan. Residues Cys877 and Cys885 are joined by a disulfide bond. 2 disulfide bridges follow: Cys1029–Cys1062 and Cys1065–Cys1072. Asn1083, Asn1102, and Asn1113 each carry an N-linked (GlcNAc...) asparagine glycan. The helical transmembrane segment at 1142-1164 (LWVILLSAFAGLLLLMLLILALW) threads the bilayer. Over 1165 to 1179 (KIGFFKRPLKKKMEK) the chain is Cytoplasmic. The GFFKR motif motif lies at 1167 to 1171 (GFFKR).

It belongs to the integrin alpha chain family. Heterodimer of an alpha and a beta subunit. Alpha-1 associates with beta-1. Interacts with RAB21. Interacts (via cytoplasmic domain) with PTPN2; activates PTPN2 phosphatase activity towards EGFR and negatively regulates EGF signaling.

It localises to the membrane. Integrin alpha-1/beta-1 is a receptor for laminin and collagen. It recognizes the proline-hydroxylated sequence G-F-P-G-E-R in collagen. Involved in anchorage-dependent, negative regulation of EGF-stimulated cell growth. The protein is Integrin alpha-1 (Itga1) of Mus musculus (Mouse).